The primary structure comprises 258 residues: 6-carboxyhexanoate--CoA ligase (258 aa).

This sequence belongs to the BioW family. As to quaternary structure, homodimer. The cofactor is Mg(2+).

The enzyme catalyses heptanedioate + ATP + CoA = 6-carboxyhexanoyl-CoA + AMP + diphosphate. It functions in the pathway metabolic intermediate metabolism; pimeloyl-CoA biosynthesis; pimeloyl-CoA from pimelate: step 1/1. In terms of biological role, catalyzes the transformation of pimelate into pimeloyl-CoA with concomitant hydrolysis of ATP to AMP. The polypeptide is 6-carboxyhexanoate--CoA ligase (Bacillus atrophaeus (strain 1942)).